The sequence spans 164 residues: Small ribosomal subunit protein uS5 (164 aa).

The S5 DRBM domain maps to 9–72; it reads YQEKLLKISR…AAAKKNIVKI (64 aa).

Belongs to the universal ribosomal protein uS5 family. In terms of assembly, part of the 30S ribosomal subunit. Contacts proteins S4 and S8.

In terms of biological role, with S4 and S12 plays an important role in translational accuracy. Functionally, located at the back of the 30S subunit body where it stabilizes the conformation of the head with respect to the body. The polypeptide is Small ribosomal subunit protein uS5 (Fusobacterium nucleatum subsp. nucleatum (strain ATCC 25586 / DSM 15643 / BCRC 10681 / CIP 101130 / JCM 8532 / KCTC 2640 / LMG 13131 / VPI 4355)).